We begin with the raw amino-acid sequence, 126 residues long: uncharacterized protein (126 aa).

Residues 83–126 (VPPPLDRSHESPEEFFPPQNRNRGGGPKAQIQRHPPEALEKTTH) form a disordered region. Residues 116 to 126 (HPPEALEKTTH) are compositionally biased toward basic and acidic residues.

This is an uncharacterized protein from Galliformes (FAdV-1).